A 115-amino-acid chain; its full sequence is MTRIKRGYIARKRRKKILAFASGFRGAHSKLFRTADQQKIRALVSAHRDRSKRKRDLRRLWITRINAAARNNGVSYNKFIRYLYKRQLLSNRRILAQIAVLDKNCFSTIINNIIE.

Belongs to the bacterial ribosomal protein bL20 family.

Its subcellular location is the plastid. It is found in the chloroplast. Functionally, binds directly to 23S ribosomal RNA and is necessary for the in vitro assembly process of the 50S ribosomal subunit. It is not involved in the protein synthesizing functions of that subunit. The polypeptide is Large ribosomal subunit protein bL20c (Cycas taitungensis (Prince sago)).